The following is a 292-amino-acid chain: Inositol monophosphatase 2 (292 aa).

Mg(2+) contacts are provided by glutamate 75, aspartate 94, isoleucine 96, aspartate 97, and aspartate 231. Substrate is bound at residue glutamate 75. Substrate is bound by residues 96–99 and aspartate 231; that span reads IDGT.

This sequence belongs to the inositol monophosphatase superfamily. It depends on Mg(2+) as a cofactor.

The enzyme catalyses a myo-inositol phosphate + H2O = myo-inositol + phosphate. The protein operates within polyol metabolism; myo-inositol biosynthesis; myo-inositol from D-glucose 6-phosphate: step 2/2. Its activity is regulated as follows. Inhibited by Li(+) and Na(+). Its function is as follows. Responsible for the provision of inositol required for synthesis of phosphatidylinositol and polyphosphoinositides and involved in the inositol cycle of calcium signaling. This chain is Inositol monophosphatase 2 (INM2), found in Saccharomyces cerevisiae (strain ATCC 204508 / S288c) (Baker's yeast).